The following is a 264-amino-acid chain: 4-hydroxy-tetrahydrodipicolinate reductase (264 aa).

8–13 (GPRGNM) serves as a coordination point for NAD(+). Lysine 36 is a binding site for NADP(+). NAD(+)-binding positions include 97-99 (GTT) and 123-126 (APNF). Histidine 153 (proton donor/acceptor) is an active-site residue. A (S)-2,3,4,5-tetrahydrodipicolinate-binding site is contributed by histidine 154. The active-site Proton donor is lysine 157. 163 to 164 (GT) is a binding site for (S)-2,3,4,5-tetrahydrodipicolinate.

The protein belongs to the DapB family.

It is found in the cytoplasm. The catalysed reaction is (S)-2,3,4,5-tetrahydrodipicolinate + NAD(+) + H2O = (2S,4S)-4-hydroxy-2,3,4,5-tetrahydrodipicolinate + NADH + H(+). It carries out the reaction (S)-2,3,4,5-tetrahydrodipicolinate + NADP(+) + H2O = (2S,4S)-4-hydroxy-2,3,4,5-tetrahydrodipicolinate + NADPH + H(+). It functions in the pathway amino-acid biosynthesis; L-lysine biosynthesis via DAP pathway; (S)-tetrahydrodipicolinate from L-aspartate: step 4/4. Catalyzes the conversion of 4-hydroxy-tetrahydrodipicolinate (HTPA) to tetrahydrodipicolinate. In Shouchella clausii (strain KSM-K16) (Alkalihalobacillus clausii), this protein is 4-hydroxy-tetrahydrodipicolinate reductase.